Here is a 273-residue protein sequence, read N- to C-terminus: Kit ligand (273 aa).

The first 25 residues, 1-25, serve as a signal peptide directing secretion; the sequence is MKKTQTWIITCIYLQLLLFNPLVKT. Residues 26-214 lie on the Extracellular side of the membrane; that stretch reads KEICGNPVTD…AKAPEDSGLQ (189 aa). 2 cysteine pairs are disulfide-bonded: cysteine 29-cysteine 114 and cysteine 68-cysteine 163. 4 N-linked (GlcNAc...) asparagine glycosylation sites follow: asparagine 90, asparagine 97, asparagine 145, and asparagine 195. The segment at 190-210 is disordered; sequence ASSLRNDSSSSNRKAAKAPED. Positions 191 to 202 are enriched in low complexity; it reads SSLRNDSSSSNR. A helical membrane pass occupies residues 215–237; it reads WTAMALPALISLVIGFAFGALYW. The Cytoplasmic segment spans residues 238–273; sequence KKKQSSLTRAVENIQINEEDNEISMLQQKEREFQEV.

The protein belongs to the SCF family. As to quaternary structure, homodimer, non-covalently linked. Heterotetramer with KIT, binding two KIT molecules; thereby mediates KIT dimerization and subsequent activation by autophosphorylation. Post-translationally, a soluble form is produced by proteolytic processing of isoform 1 in the extracellular domain. Expressed in the cochlea.

The protein resides in the cell membrane. Its subcellular location is the cytoplasm. The protein localises to the cytoskeleton. It is found in the cell projection. It localises to the lamellipodium. The protein resides in the filopodium. Its subcellular location is the secreted. Ligand for the receptor-type protein-tyrosine kinase KIT. Plays an essential role in the regulation of cell survival and proliferation, hematopoiesis, stem cell maintenance, gametogenesis, mast cell development, migration and function, and in melanogenesis. KITLG/SCF binding can activate several signaling pathways. Promotes phosphorylation of PIK3R1, the regulatory subunit of phosphatidylinositol 3-kinase, and subsequent activation of the kinase AKT1. KITLG/SCF and KIT also transmit signals via GRB2 and activation of RAS, RAF1 and the MAP kinases MAPK1/ERK2 and/or MAPK3/ERK1. KITLG/SCF and KIT promote activation of STAT family members STAT1, STAT3 and STAT5. KITLG/SCF and KIT promote activation of PLCG1, leading to the production of the cellular signaling molecules diacylglycerol and inositol 1,4,5-trisphosphate. KITLG/SCF acts synergistically with other cytokines, probably interleukins. This chain is Kit ligand (Kitlg), found in Mus musculus (Mouse).